The following is a 193-amino-acid chain: Signal peptidase I (193 aa).

Over Met-1–Lys-25 the chain is Cytoplasmic. A helical membrane pass occupies residues Ala-26–Phe-42. Residues Glu-43–Lys-193 are Extracellular-facing. Active-site residues include Ser-51 and Lys-93.

Belongs to the peptidase S26 family.

The protein localises to the cell membrane. It catalyses the reaction Cleavage of hydrophobic, N-terminal signal or leader sequences from secreted and periplasmic proteins.. The protein is Signal peptidase I (sipS2) of Bacillus amyloliquefaciens (Bacillus velezensis).